A 598-amino-acid polypeptide reads, in one-letter code: Fumarate reductase flavoprotein subunit (598 aa).

FAD is bound by residues 12–16 (GAGGA), 36–38 (ISK), 44–52 (SHTVAAEGG), 156–158 (HFV), and D212. Tele-8alpha-FAD histidine is present on H45. Active-site residues include H233 and R249. FAD is bound by residues 356–357 (HY), E380, and 391–397 (RLGSNSL). The disordered stretch occupies residues 577-598 (AKRVYGGEADAQEKSDKEQANG). A compositionally biased stretch (basic and acidic residues) spans 587–598 (AQEKSDKEQANG).

This sequence belongs to the FAD-dependent oxidoreductase 2 family. FRD/SDH subfamily. As to quaternary structure, part of an enzyme complex containing four subunits: a flavoprotein (FrdA), an iron-sulfur protein (FrdB), and two hydrophobic anchor proteins (FrdC and FrdD). Interacts with SdhE. FAD is required as a cofactor.

The protein resides in the cell inner membrane. It carries out the reaction a quinone + succinate = fumarate + a quinol. The catalysed reaction is a menaquinone + succinate = a menaquinol + fumarate. Its function is as follows. Two distinct, membrane-bound, FAD-containing enzymes are responsible for the catalysis of fumarate and succinate interconversion; the fumarate reductase is used in anaerobic growth, and the succinate dehydrogenase is used in aerobic growth. In Serratia sp. (strain ATCC 39006) (Prodigiosinella confusarubida), this protein is Fumarate reductase flavoprotein subunit.